Reading from the N-terminus, the 1368-residue chain is DNA-directed RNA polymerase subunit beta (1368 aa).

The protein belongs to the RNA polymerase beta chain family. As to quaternary structure, the RNAP catalytic core consists of 2 alpha, 1 beta, 1 beta' and 1 omega subunit. When a sigma factor is associated with the core the holoenzyme is formed, which can initiate transcription.

It carries out the reaction RNA(n) + a ribonucleoside 5'-triphosphate = RNA(n+1) + diphosphate. Its function is as follows. DNA-dependent RNA polymerase catalyzes the transcription of DNA into RNA using the four ribonucleoside triphosphates as substrates. The polypeptide is DNA-directed RNA polymerase subunit beta (Paraburkholderia phymatum (strain DSM 17167 / CIP 108236 / LMG 21445 / STM815) (Burkholderia phymatum)).